We begin with the raw amino-acid sequence, 469 residues long: Glutamine synthetase (469 aa).

Residues 14-98 form the GS beta-grasp domain; that stretch reads NDVKYVDLRF…VVCDVLEPTT (85 aa). A GS catalytic domain is found at 106 to 469; that stretch reads PRGIAKKAMA…PVEFEMYYSV (364 aa). Positions 131 and 133 each coordinate Mg(2+). Glu-209 contributes to the ATP binding site. Mg(2+) contacts are provided by Glu-214 and Glu-221. L-glutamate contacts are provided by residues 265-266 and Gly-266; that span reads NG. His-270 contacts Mg(2+). Residues 272 to 274 and Ser-274 each bind ATP; that span reads HQS. Residues Arg-322, Glu-328, and Arg-340 each coordinate L-glutamate. ATP-binding residues include Arg-340, Arg-345, and Lys-353. Glu-358 contributes to the Mg(2+) binding site. Residue Arg-360 participates in L-glutamate binding. Tyr-398 carries the O-AMP-tyrosine modification.

This sequence belongs to the glutamine synthetase family. As to quaternary structure, oligomer of 12 subunits arranged in the form of two hexameric ring. The cofactor is Mg(2+).

The protein resides in the cytoplasm. It catalyses the reaction L-glutamate + NH4(+) + ATP = L-glutamine + ADP + phosphate + H(+). With respect to regulation, the activity of this enzyme could be controlled by adenylation under conditions of abundant glutamine. Functionally, catalyzes the ATP-dependent biosynthesis of glutamine from glutamate and ammonia. The protein is Glutamine synthetase of Azorhizobium caulinodans (strain ATCC 43989 / DSM 5975 / JCM 20966 / LMG 6465 / NBRC 14845 / NCIMB 13405 / ORS 571).